The primary structure comprises 142 residues: Large ribosomal subunit protein uL13 (142 aa).

Belongs to the universal ribosomal protein uL13 family. Part of the 50S ribosomal subunit.

Functionally, this protein is one of the early assembly proteins of the 50S ribosomal subunit, although it is not seen to bind rRNA by itself. It is important during the early stages of 50S assembly. The sequence is that of Large ribosomal subunit protein uL13 from Chromohalobacter salexigens (strain ATCC BAA-138 / DSM 3043 / CIP 106854 / NCIMB 13768 / 1H11).